The chain runs to 487 residues: Protein nucleotidyltransferase YdiU (487 aa).

Positions 90, 92, 93, 113, 125, 126, 176, and 183 each coordinate ATP. D252 acts as the Proton acceptor in catalysis. Mg(2+) contacts are provided by N253 and D262. Residue D262 coordinates ATP.

This sequence belongs to the SELO family. Requires Mg(2+) as cofactor. The cofactor is Mn(2+).

It carries out the reaction L-seryl-[protein] + ATP = 3-O-(5'-adenylyl)-L-seryl-[protein] + diphosphate. The enzyme catalyses L-threonyl-[protein] + ATP = 3-O-(5'-adenylyl)-L-threonyl-[protein] + diphosphate. It catalyses the reaction L-tyrosyl-[protein] + ATP = O-(5'-adenylyl)-L-tyrosyl-[protein] + diphosphate. The catalysed reaction is L-histidyl-[protein] + UTP = N(tele)-(5'-uridylyl)-L-histidyl-[protein] + diphosphate. It carries out the reaction L-seryl-[protein] + UTP = O-(5'-uridylyl)-L-seryl-[protein] + diphosphate. The enzyme catalyses L-tyrosyl-[protein] + UTP = O-(5'-uridylyl)-L-tyrosyl-[protein] + diphosphate. Its function is as follows. Nucleotidyltransferase involved in the post-translational modification of proteins. It can catalyze the addition of adenosine monophosphate (AMP) or uridine monophosphate (UMP) to a protein, resulting in modifications known as AMPylation and UMPylation. The polypeptide is Protein nucleotidyltransferase YdiU (Pseudomonas fluorescens (strain Pf0-1)).